The chain runs to 233 residues: MNKILLQCDNLCKRYQEGSVQTDVLHNVSFSVGEGEMMAIVGSSGSGKSTLLHLLGGLDTPTSGDVIFNGQPMSKLSSAAKAELRNQKLGFIYQFHHLLPDFTALENVAMPLLIGKKKPAEINSRALEMLKAVGLDHRANHRPSELSGGERQRVAIARALVNNPRLVLADEPTGNLDARNADSIFQLLGELNRLQGTAFLVVTHDLQLAKRMSRQLEMRDGRLTAELSLMGAE.

Residues leucine 6–glutamate 233 form the ABC transporter domain. An ATP-binding site is contributed by glycine 42–serine 49.

This sequence belongs to the ABC transporter superfamily. Lipoprotein translocase (TC 3.A.1.125) family. As to quaternary structure, the complex is composed of two ATP-binding proteins (LolD) and two transmembrane proteins (LolC and LolE).

The protein resides in the cell inner membrane. In terms of biological role, part of the ABC transporter complex LolCDE involved in the translocation of mature outer membrane-directed lipoproteins, from the inner membrane to the periplasmic chaperone, LolA. Responsible for the formation of the LolA-lipoprotein complex in an ATP-dependent manner. Such a release is dependent of the sorting-signal (absence of an Asp at position 2 of the mature lipoprotein) and of LolA. In Escherichia coli (strain K12), this protein is Lipoprotein-releasing system ATP-binding protein LolD.